The chain runs to 180 residues: NAD(P)H-quinone oxidoreductase subunit I, chloroplastic (180 aa).

2 4Fe-4S ferredoxin-type domains span residues 55-84 (GRIH…VDWR) and 95-124 (LNYS…MTEE). The [4Fe-4S] cluster site is built by Cys-64, Cys-67, Cys-70, Cys-74, Cys-104, Cys-107, Cys-110, and Cys-114.

Belongs to the complex I 23 kDa subunit family. In terms of assembly, NDH is composed of at least 16 different subunits, 5 of which are encoded in the nucleus. It depends on [4Fe-4S] cluster as a cofactor.

It localises to the plastid. The protein localises to the chloroplast thylakoid membrane. It catalyses the reaction a plastoquinone + NADH + (n+1) H(+)(in) = a plastoquinol + NAD(+) + n H(+)(out). The enzyme catalyses a plastoquinone + NADPH + (n+1) H(+)(in) = a plastoquinol + NADP(+) + n H(+)(out). Its function is as follows. NDH shuttles electrons from NAD(P)H:plastoquinone, via FMN and iron-sulfur (Fe-S) centers, to quinones in the photosynthetic chain and possibly in a chloroplast respiratory chain. The immediate electron acceptor for the enzyme in this species is believed to be plastoquinone. Couples the redox reaction to proton translocation, and thus conserves the redox energy in a proton gradient. The polypeptide is NAD(P)H-quinone oxidoreductase subunit I, chloroplastic (Hordeum vulgare (Barley)).